The chain runs to 336 residues: Cinnamoyl-CoA reductase 2 (336 aa).

NADP(+)-binding positions include 21 to 27 (GAGGFIA), arginine 46, lysine 52, 72 to 73 (DL), 92 to 94 (TAS), tyrosine 165, lysine 169, 192 to 195 (PVVV), and serine 207. Cysteine 158 and cysteine 166 are joined by a disulfide. The active-site Proton donor is the lysine 169.

The protein belongs to the NAD(P)-dependent epimerase/dehydratase family. Dihydroflavonol-4-reductase subfamily. The formation of a reversible disulfide bond reduces activity by perturbing the positioning of nearby catalytic residues. In terms of tissue distribution, mainly expressed in roots and stems, especially at the second internode and, to a lower extent, in leaves and flowers. Localized in vascular elements, with weaker expression in the interfascicular (xylem fiber) region.

The protein resides in the cytoplasm. It catalyses the reaction (E)-coniferaldehyde + NADP(+) + CoA = (E)-feruloyl-CoA + NADPH + H(+). The enzyme catalyses (E)-4-coumaraldehyde + NADP(+) + CoA = (E)-4-coumaroyl-CoA + NADPH + H(+). The catalysed reaction is (E)-sinapaldehyde + NADP(+) + CoA = (E)-sinapoyl-CoA + NADPH + H(+). It carries out the reaction (E)-cinnamaldehyde + NADP(+) + CoA = (E)-cinnamoyl-CoA + NADPH + H(+). It catalyses the reaction (E)-caffeyl aldehyde + NADP(+) + CoA = (E)-caffeoyl-CoA + NADPH + H(+). Its pathway is aromatic compound metabolism; phenylpropanoid biosynthesis. In terms of biological role, involved in the latter stages of lignin biosynthesis. Catalyzes one of the last steps of monolignol biosynthesis, the conversion of cinnamoyl-CoAs into their corresponding cinnamaldehydes. Mediates the conversion of caffeoyl-CoA and coumaroyl-CoA to caffaldehyde and coumaraldehyde, respectively. Also active, with a lower efficiency, toward feruloyl-CoA and sinapoyl-CoA. Involved in the production of floral volatile phenylpropanoids in flowers of fragrant cultivars from cinnamic acid, a common precursor with the anthocyanin biosynthesis pathway involved in flower pigmentation. The protein is Cinnamoyl-CoA reductase 2 of Medicago truncatula (Barrel medic).